Reading from the N-terminus, the 398-residue chain is Cysteine protease ATG4A (398 aa).

The active-site Nucleophile is C77. Catalysis depends on residues D279 and H281. The short motif at 393–396 is the LIR element; that stretch reads FEIL.

Belongs to the peptidase C54 family. Interacts with ATG9A; the interaction is direct.

The protein localises to the cytoplasm. The enzyme catalyses [protein]-C-terminal L-amino acid-glycyl-phosphatidylethanolamide + H2O = [protein]-C-terminal L-amino acid-glycine + a 1,2-diacyl-sn-glycero-3-phosphoethanolamine. Inhibited by N-ethylmaleimide. Redox-regulated during autophagy since reducing conditions activate ATG4A whereas an oxidizing environment such as the presence of H(2)O(2) inhibits its activity. Its function is as follows. Cysteine protease that plays a key role in autophagy by mediating both proteolytic activation and delipidation of ATG8 family proteins. The protease activity is required for proteolytic activation of ATG8 family proteins: cleaves the C-terminal amino acid of ATG8 proteins to reveal a C-terminal glycine. Exposure of the glycine at the C-terminus is essential for ATG8 proteins conjugation to phosphatidylethanolamine (PE) and insertion to membranes, which is necessary for autophagy. Preferred substrate is GABARAPL2 followed by MAP1LC3A and GABARAP. Protease activity is also required to counteract formation of high-molecular weight conjugates of ATG8 proteins (ATG8ylation): acts as a deubiquitinating-like enzyme that removes ATG8 conjugated to other proteins, such as ATG3. In addition to the protease activity, also mediates delipidation of ATG8 family proteins. Catalyzes delipidation of PE-conjugated forms of ATG8 proteins during macroautophagy. Compared to ATG4B, the major protein for proteolytic activation of ATG8 proteins, shows weaker ability to cleave the C-terminal amino acid of ATG8 proteins, while it displays stronger delipidation activity. Involved in phagophore growth during mitophagy independently of its protease activity and of ATG8 proteins: acts by regulating ATG9A trafficking to mitochondria and promoting phagophore-endoplasmic reticulum contacts during the lipid transfer phase of mitophagy. In terms of biological role, (Microbial infection) Mediates cleavage of an ATG8 protein homolog coded in the genome of cytopathogenic bovine viral diarrhea virus (BVDV). This Bos taurus (Bovine) protein is Cysteine protease ATG4A.